Consider the following 357-residue polypeptide: Aminomethyltransferase (357 aa).

Belongs to the GcvT family. The glycine cleavage system is composed of four proteins: P, T, L and H.

The enzyme catalyses N(6)-[(R)-S(8)-aminomethyldihydrolipoyl]-L-lysyl-[protein] + (6S)-5,6,7,8-tetrahydrofolate = N(6)-[(R)-dihydrolipoyl]-L-lysyl-[protein] + (6R)-5,10-methylene-5,6,7,8-tetrahydrofolate + NH4(+). Functionally, the glycine cleavage system catalyzes the degradation of glycine. This chain is Aminomethyltransferase, found in Deinococcus deserti (strain DSM 17065 / CIP 109153 / LMG 22923 / VCD115).